The following is a 1305-amino-acid chain: Nonribosomal peptide synthetase hkm11 (1305 aa).

An adenylation region spans residues Thr278–Lys672. Positions Ala788 to Asn864 constitute a Carrier domain. The residue at position 825 (Ser825) is an O-(pantetheine 4'-phosphoryl)serine. Residues Lys926–Val1166 are condensation.

Belongs to the NRP synthetase family.

It catalyses the reaction hancockiamide D + (E)-cinnamate + ATP = hancockiamide A + AMP + diphosphate. It carries out the reaction hancockiamide H + (E)-cinnamate + ATP = hancockiamide G + AMP + diphosphate. It functions in the pathway secondary metabolite biosynthesis. Functionally, nonribosomal peptide synthetase; part of the gene cluster that mediates the biosynthesis of hancockiamides, an unusual new family of N-cinnamoylated piperazines. The NRPS hkm10 and the NmrA-like reductase hkm9 are proposed to convert two molecules of L-Phe to the intermediary piperazine called xenocockiamide A. Xenocockiamide A is then converted to hancockiamide D via a series of hydroxylations and O-methylations. The tyrosinase hkm6 may catalyze an aromatic hydroxylation, then the 2-oxoglutarate-dependent Fe(II) dioxygenase hkm4 and the FAD-dependent phenol hydroxylase hkm7 may catalyze consecutive hydroxylations to install 2 more hydroxy groups, and the methyltransferase hkm8 probably catalyzes two methylations using 2 molecules of S-adenosyl-L-methionine (SAM). The NRPS hkm11 activates and transfers trans-cinnamate supplied by the PAL hkm12 to hancockiamide D and produces hancockiamide A. NRPS Hkm11 has the flexibility to tolerate the bulky hancockiamide G as a substrate and the absence of the acetyl-transferase hkm3 opens up the opportunity for hkm11 to introduce a second N-cinnamoyl moiety. The cytochrome P450 monooxygenase hkm5 catalyzes the methylenedioxy bridge formation, converting hancockiamide A into hancockiamide G. Hkm5 can also convert hancockiamide B into hancockiamide C, and hancockiamide D into hancockiamide H. The N-acetyltransferase hkm3 finally transfers an acetyl group to 1-N of piperazine, converting hancockiamide A into hancockiamide B and hancockiamide G into hancockiamide C. The protein is Nonribosomal peptide synthetase hkm11 of Aspergillus hancockii.